We begin with the raw amino-acid sequence, 421 residues long: D-amino acid dehydrogenase (421 aa).

Residue 4–18 (VLVLGSGVVGLTSAW) coordinates FAD.

The protein belongs to the DadA oxidoreductase family. FAD is required as a cofactor.

It carries out the reaction a D-alpha-amino acid + A + H2O = a 2-oxocarboxylate + AH2 + NH4(+). It participates in amino-acid degradation; D-alanine degradation; NH(3) and pyruvate from D-alanine: step 1/1. In terms of biological role, oxidative deamination of D-amino acids. In Vibrio cholerae serotype O1 (strain ATCC 39541 / Classical Ogawa 395 / O395), this protein is D-amino acid dehydrogenase.